Consider the following 382-residue polypeptide: Myb-like transcription factor (382 aa).

3 consecutive Myb-like domains span residues 1–57 (MPRS…RWSK), 58–108 (ITGA…QHCL), and 109–160 (DPSL…ITLF). A compositionally biased stretch (acidic residues) spans 194-210 (MSMDASEDGDDAEDDQT). Positions 194–240 (MSMDASEDGDDAEDDQTPDSYTSISTSSFDDILGGSSSSPSAADTMT) are disordered. Residues 211–240 (PDSYTSISTSSFDDILGGSSSSPSAADTMT) are compositionally biased toward polar residues.

It is found in the nucleus. Its function is as follows. Transcription factor; part of the gene cluster that mediates the biosynthesis of 1233A, a natural compound known as an inhibitor of HMG-CoA synthase in the mevalonate pathway and with antibacterial and antifungal activities. Involved in hygromycin B-induced transcriptional control of the cluster. This is Myb-like transcription factor from Fusarium sp.